We begin with the raw amino-acid sequence, 139 residues long: D-ribose pyranase (139 aa).

The active-site Proton donor is the H20. Substrate-binding positions include D28, H106, and 128–130; that span reads YAN.

The protein belongs to the RbsD / FucU family. RbsD subfamily. Homodecamer.

It localises to the cytoplasm. The enzyme catalyses beta-D-ribopyranose = beta-D-ribofuranose. It functions in the pathway carbohydrate metabolism; D-ribose degradation; D-ribose 5-phosphate from beta-D-ribopyranose: step 1/2. Catalyzes the interconversion of beta-pyran and beta-furan forms of D-ribose. The chain is D-ribose pyranase from Actinobacillus pleuropneumoniae serotype 5b (strain L20).